The following is a 384-amino-acid chain: Formate-dependent phosphoribosylglycinamide formyltransferase (384 aa).

N(1)-(5-phospho-beta-D-ribosyl)glycinamide is bound by residues 14 to 15 (EL) and glutamate 74. Residues arginine 106, lysine 147, 152–157 (SSGKGQ), 187–190 (EEFI), and glutamate 195 each bind ATP. An ATP-grasp domain is found at 111–300 (RLAAETLGLA…EFALHVRAIL (190 aa)). The Mg(2+) site is built by glutamate 259 and glutamate 271. N(1)-(5-phospho-beta-D-ribosyl)glycinamide contacts are provided by residues aspartate 278, lysine 348, and 355-356 (RR).

Belongs to the PurK/PurT family. Homodimer.

The catalysed reaction is N(1)-(5-phospho-beta-D-ribosyl)glycinamide + formate + ATP = N(2)-formyl-N(1)-(5-phospho-beta-D-ribosyl)glycinamide + ADP + phosphate + H(+). It participates in purine metabolism; IMP biosynthesis via de novo pathway; N(2)-formyl-N(1)-(5-phospho-D-ribosyl)glycinamide from N(1)-(5-phospho-D-ribosyl)glycinamide (formate route): step 1/1. Catalyzes two reactions: the first one is the production of beta-formyl glycinamide ribonucleotide (GAR) from formate, ATP and beta GAR; the second, a side reaction, is the production of acetyl phosphate and ADP from acetate and ATP. In terms of biological role, involved in the de novo purine biosynthesis. Catalyzes the transfer of formate to 5-phospho-ribosyl-glycinamide (GAR), producing 5-phospho-ribosyl-N-formylglycinamide (FGAR). Formate is provided by PurU via hydrolysis of 10-formyl-tetrahydrofolate. This chain is Formate-dependent phosphoribosylglycinamide formyltransferase, found in Bacillus subtilis (strain 168).